Consider the following 156-residue polypeptide: Ribosomal RNA large subunit methyltransferase H (156 aa).

S-adenosyl-L-methionine contacts are provided by residues Leu-73, Gly-104, and 123–128 (IGPLTL).

It belongs to the RNA methyltransferase RlmH family. In terms of assembly, homodimer.

It localises to the cytoplasm. The enzyme catalyses pseudouridine(1915) in 23S rRNA + S-adenosyl-L-methionine = N(3)-methylpseudouridine(1915) in 23S rRNA + S-adenosyl-L-homocysteine + H(+). Its function is as follows. Specifically methylates the pseudouridine at position 1915 (m3Psi1915) in 23S rRNA. This chain is Ribosomal RNA large subunit methyltransferase H, found in Xanthomonas euvesicatoria pv. vesicatoria (strain 85-10) (Xanthomonas campestris pv. vesicatoria).